The chain runs to 329 residues: ATP-dependent (S)-NAD(P)H-hydrate dehydratase (329 aa).

Residues 1–28 constitute a mitochondrion transit peptide; the sequence is MALGPGCRAVRGCRPVLKRAFSLHKAHS. The 292-residue stretch at 35 to 326 folds into the YjeF C-terminal domain; that stretch reads ILQLVRSVVP…AEVGPAFRRL (292 aa). Position 49 is an N6-acetyllysine (Lys49). Tyr67 carries the phosphotyrosine modification. (6S)-NADPHX contacts are provided by residues Gly135 and 188–194; that span reads NHVEFGR. ATP-binding positions include 228–232 and 247–256; these read KGEQD and GSGRRCGGQG. Asp257 lines the (6S)-NADPHX pocket.

Belongs to the NnrD/CARKD family. Mg(2+) serves as cofactor.

Its subcellular location is the mitochondrion. The enzyme catalyses (6S)-NADHX + ATP = ADP + phosphate + NADH + H(+). It carries out the reaction (6S)-NADPHX + ATP = ADP + phosphate + NADPH + H(+). Functionally, catalyzes the dehydration of the S-form of NAD(P)HX at the expense of ATP, which is converted to ADP. Together with NAD(P)HX epimerase, which catalyzes the epimerization of the S- and R-forms, the enzyme allows the repair of both epimers of NAD(P)HX, a damaged form of NAD(P)H that is a result of enzymatic or heat-dependent hydration. The sequence is that of ATP-dependent (S)-NAD(P)H-hydrate dehydratase from Bos taurus (Bovine).